The primary structure comprises 314 residues: Deacetoxycephalosporin C synthase (314 aa).

Residues 156–269 (DCEPLLRLRY…RTSSVFFLRP (114 aa)) form the Fe2OG dioxygenase domain.

The protein belongs to the iron/ascorbate-dependent oxidoreductase family. Fe cation is required as a cofactor. L-ascorbate serves as cofactor.

The catalysed reaction is penicillin N + 2-oxoglutarate + O2 = deacetoxycephalosporin C + succinate + CO2 + H2O. Its pathway is antibiotic biosynthesis; cephalosporin C biosynthesis. Catalyzes the step from penicillin N to deacetoxy-cephalosporin C. This chain is Deacetoxycephalosporin C synthase (cefE), found in Amycolatopsis lactamdurans (Nocardia lactamdurans).